The sequence spans 469 residues: tRNA-2-methylthio-N(6)-dimethylallyladenosine synthase (469 aa).

The MTTase N-terminal domain occupies 22–142 (RKVFIKTYGC…LPEALRRAQQ (121 aa)). [4Fe-4S] cluster contacts are provided by cysteine 31, cysteine 67, cysteine 105, cysteine 183, cysteine 187, and cysteine 190. The region spanning 169–401 (RARGVTAFLT…QALLLKQQQE (233 aa)) is the Radical SAM core domain. Residues 404 to 466 (ESCIGKEIDL…TNSLFAERAE (63 aa)) enclose the TRAM domain.

Belongs to the methylthiotransferase family. MiaB subfamily. In terms of assembly, monomer. It depends on [4Fe-4S] cluster as a cofactor.

It is found in the cytoplasm. It catalyses the reaction N(6)-dimethylallyladenosine(37) in tRNA + (sulfur carrier)-SH + AH2 + 2 S-adenosyl-L-methionine = 2-methylsulfanyl-N(6)-dimethylallyladenosine(37) in tRNA + (sulfur carrier)-H + 5'-deoxyadenosine + L-methionine + A + S-adenosyl-L-homocysteine + 2 H(+). Functionally, catalyzes the methylthiolation of N6-(dimethylallyl)adenosine (i(6)A), leading to the formation of 2-methylthio-N6-(dimethylallyl)adenosine (ms(2)i(6)A) at position 37 in tRNAs that read codons beginning with uridine. The protein is tRNA-2-methylthio-N(6)-dimethylallyladenosine synthase of Rhizobium etli (strain CIAT 652).